The sequence spans 147 residues: MVRLTDSEKAEVVSLWSKVDEKIIGSEALGRLLVIYPWTRRFFEHFGDLSTADAILKNPRVQAHGEKVLSSFGEGLNHLDNLRGTFAQLSELHCDELHVDPENFRLLGNILVVVLARHYGKEFTLEVQAACQKFVAGMANALAHKYH.

The Globin domain occupies 3-147 (RLTDSEKAEV…MANALAHKYH (145 aa)). Heme b contacts are provided by H64 and H93.

The protein belongs to the globin family. Heterotetramer of two delta chains and two alpha chains. As to expression, red blood cells.

This Procavia capensis (Rock hyrax) protein is Hemoglobin subunit deltaH.